The following is a 202-amino-acid chain: MFISFEGTEGVGKTTLIRKLYEHFEASGKQVVLTREPGGTPLAEQIRSLLLAVNHDEPMSSDTELLLMYAARAQHLQQVIVPALADEKLVLSDRFTDASYAYQCVGRGLSKDKLNTLNQTFVSHMPDITFWLDAPIELGMSRARERGALDRFEQEKVEFFQRVRQGYQQLHELYPERIKRLDATQAPEIVFQEALEHIQALV.

7–14 (GTEGVGKT) provides a ligand contact to ATP.

The protein belongs to the thymidylate kinase family.

The catalysed reaction is dTMP + ATP = dTDP + ADP. In terms of biological role, phosphorylation of dTMP to form dTDP in both de novo and salvage pathways of dTTP synthesis. The chain is Thymidylate kinase from Acinetobacter baylyi (strain ATCC 33305 / BD413 / ADP1).